We begin with the raw amino-acid sequence, 334 residues long: GTP 3',8-cyclase (334 aa).

A Radical SAM core domain is found at G11–A236. R20 serves as a coordination point for GTP. 2 residues coordinate [4Fe-4S] cluster: C27 and C31. Residue Y33 participates in S-adenosyl-L-methionine binding. Position 34 (C34) interacts with [4Fe-4S] cluster. Residue R69 participates in GTP binding. G73 is a binding site for S-adenosyl-L-methionine. T100 is a GTP binding site. S124 lines the S-adenosyl-L-methionine pocket. K161 contacts GTP. Residue M195 participates in S-adenosyl-L-methionine binding. Residues C260 and C263 each contribute to the [4Fe-4S] cluster site. R265–R267 contacts GTP. Residue C277 coordinates [4Fe-4S] cluster.

The protein belongs to the radical SAM superfamily. MoaA family. As to quaternary structure, monomer and homodimer. [4Fe-4S] cluster serves as cofactor.

It catalyses the reaction GTP + AH2 + S-adenosyl-L-methionine = (8S)-3',8-cyclo-7,8-dihydroguanosine 5'-triphosphate + 5'-deoxyadenosine + L-methionine + A + H(+). Its pathway is cofactor biosynthesis; molybdopterin biosynthesis. In terms of biological role, catalyzes the cyclization of GTP to (8S)-3',8-cyclo-7,8-dihydroguanosine 5'-triphosphate. In Pseudomonas putida (strain GB-1), this protein is GTP 3',8-cyclase.